The following is a 76-amino-acid chain: DNA-directed RNA polymerase subunit epsilon (76 aa).

The protein belongs to the RNA polymerase subunit epsilon family. In terms of assembly, RNAP is composed of a core of 2 alpha, a beta and a beta' subunit. The core is associated with a delta subunit, and at least one of epsilon or omega. When a sigma factor is associated with the core the holoenzyme is formed, which can initiate transcription.

The enzyme catalyses RNA(n) + a ribonucleoside 5'-triphosphate = RNA(n+1) + diphosphate. A non-essential component of RNA polymerase (RNAP). The sequence is that of DNA-directed RNA polymerase subunit epsilon from Streptococcus sanguinis (strain SK36).